The sequence spans 310 residues: MGKKMVVALGGNAILSNDASAHAQQQALVQTSAYLVHLIKQGHRLIVSHGNGPQVGNLLLQQQAADSEKNPAMPLDTCVAMTQGSIGYWLSNALNQELNKAGIKKQVATVLTQVVVDPADEAFKNPTKPIGPFLTEAEAKEAMQAGAIFKEDAGRGWRKVVPSPKPIDIHEAETINTLIKNDIITISCGGGGIPVVGQELKGVEAVIDKDFASEKLAELVDADALVILTGVDYVCINYGKPDEKQLTNVTVAELEEYKQAGHFAPGSMLPKIEAAIQFVESQPNKQAIITSLENLGSMSGDEIVGTVVTK.

In terms of assembly, homodimer (predominantly) and homotetramer.

It is found in the cytoplasm. The enzyme catalyses hydrogencarbonate + NH4(+) + ATP = carbamoyl phosphate + ADP + H2O + H(+). Its pathway is metabolic intermediate metabolism; carbamoyl phosphate degradation; CO(2) and NH(3) from carbamoyl phosphate: step 1/1. With respect to regulation, inhibited by adenosine(5')pentaphospho(5')adenosine (Ap5A), Ap6A and to a much lower extent by Ap4A. Functionally, catalyzes the reversible synthesis of carbamate and ATP from carbamoyl phosphate and ADP. Can also catalyze, although with low efficiency, the phosphorylation of bicarbonate, leading to the formation of carboxyphosphate, an unstable intermediate found in the reactions catalyzed by carbamoyl-phosphate synthase and biotin carboxylase. Can also use acetate. This Enterococcus faecium (Streptococcus faecium) protein is Carbamate kinase 1 (arcC1).